The primary structure comprises 83 residues: MKFLFLFLAILLAMEPVVSGRRHMLRCMGDLGICRPACRQSEEPYLYCRNYQPCCLPFYVRIDISGKEGKNDWSRENRWPKVS.

Residues 1 to 20 (MKFLFLFLAILLAMEPVVSG) form the signal peptide. Cystine bridges form between Cys27–Cys54, Cys34–Cys48, and Cys38–Cys55.

It belongs to the beta-defensin family.

The protein localises to the secreted. Has antibacterial activity. This Bos taurus (Bovine) protein is Beta-defensin 119 (DEFB119).